Consider the following 499-residue polypeptide: U4/U6 small nuclear ribonucleoprotein Prp31 (499 aa).

The disordered stretch occupies residues 1–37 (MSLADELLADLEEAAEEEEGGSYGEEEEEPAIEDVQE). Positions 7 to 37 (LLADLEEAAEEEEGGSYGEEEEEPAIEDVQE) are enriched in acidic residues. Coiled-coil stretches lie at residues 85-120 (EAAP…KYSK) and 181-215 (EEEL…MSFI). The Nop domain maps to 215-333 (IAPNLSIIIG…IERKFDKWQE (119 aa)). The tract at residues 334-357 (PPPVKQVKPLPAPLDGQRKKRGGR) is disordered. A Nuclear localization signal (NLS) motif is present at residues 351–364 (RKKRGGRRYRKMKE). Residues Ser-379, Ser-395, and Ser-432 each carry the phosphoserine modification. Lys-438 carries the post-translational modification N6-acetyllysine. Ser-439 carries the post-translational modification Phosphoserine. At Thr-440 the chain carries Phosphothreonine. Ser-450 is modified (phosphoserine). The residue at position 455 (Thr-455) is a Phosphothreonine. Residues Lys-471 and Lys-478 each participate in a glycyl lysine isopeptide (Lys-Gly) (interchain with G-Cter in SUMO2) cross-link.

Belongs to the PRP31 family. As to quaternary structure, identified in the spliceosome B complex. Component of the U4/U6-U5 tri-snRNP complex composed of the U4, U6 and U5 snRNAs and at least PRPF3, PRPF4, PRPF6, PRPF8, PRPF31, SNRNP200, TXNL4A, SNRNP40, DDX23, CD2BP2, PPIH, SNU13, EFTUD2, SART1 and USP39. Interacts with a complex formed by SNU13 and U4 snRNA, but not with SNU13 or U4 snRNA alone. The complex formed by SNU13 and PRPF31 also binds U4atac snRNA, a characteristic component of specific, less abundant spliceosomal complexes. Interacts with PRPF6/U5 snRNP-associated 102 kDa protein. Component of some MLL1/MLL complex, at least composed of the core components KMT2A/MLL1, ASH2L, HCFC1/HCF1, WDR5 and RBBP5, as well as the facultative components BACC1, CHD8, E2F6, HSP70, INO80C, KANSL1, LAS1L, MAX, MCRS1, MGA, KAT8/MOF, PELP1, PHF20, PRP31, RING2, RUVB1/TIP49A, RUVB2/TIP49B, SENP3, TAF1, TAF4, TAF6, TAF7, TAF9 and TEX10. Interacts (via its NLS) with CTNNBL1. Interacts with USH1G. Phosphorylated by PRP4K during spliceosome assembly. In terms of tissue distribution, ubiquitously expressed.

Its subcellular location is the nucleus. The protein localises to the nucleus speckle. It localises to the cajal body. Functionally, involved in pre-mRNA splicing as component of the spliceosome. Required for the assembly of the U4/U5/U6 tri-snRNP complex, one of the building blocks of the spliceosome. This is U4/U6 small nuclear ribonucleoprotein Prp31 from Homo sapiens (Human).